Here is a 227-residue protein sequence, read N- to C-terminus: MRWAIVRFPGANCDEDARFALEKAGIRAEFVWHTERDLRGFDGVFLPGGFSYGDYLRAGALAAKSPVMEAVRRFAEEGRYVVGVCNGFQILTEAGLLPGALLANLNLHFTCKEVGVRVERNDLPFTRLYPRGQVLRLPIAHGEGRYYADPETLARLEGEGLVVFRYAPLKDEADYNPNGSLHDIAGIVSEKGNVLGMMPHPERAVDEVLGNTDGLPFFLGLVKEVAR.

In terms of domain architecture, Glutamine amidotransferase type-1 spans 2-227; sequence RWAIVRFPGA…FLGLVKEVAR (226 aa). Cysteine 85 acts as the Nucleophile in catalysis. Residues histidine 200 and glutamate 202 contribute to the active site.

In terms of assembly, part of the FGAM synthase complex composed of 1 PurL, 1 PurQ and 2 PurS subunits.

The protein localises to the cytoplasm. It carries out the reaction N(2)-formyl-N(1)-(5-phospho-beta-D-ribosyl)glycinamide + L-glutamine + ATP + H2O = 2-formamido-N(1)-(5-O-phospho-beta-D-ribosyl)acetamidine + L-glutamate + ADP + phosphate + H(+). The enzyme catalyses L-glutamine + H2O = L-glutamate + NH4(+). It functions in the pathway purine metabolism; IMP biosynthesis via de novo pathway; 5-amino-1-(5-phospho-D-ribosyl)imidazole from N(2)-formyl-N(1)-(5-phospho-D-ribosyl)glycinamide: step 1/2. Its function is as follows. Part of the phosphoribosylformylglycinamidine synthase complex involved in the purines biosynthetic pathway. Catalyzes the ATP-dependent conversion of formylglycinamide ribonucleotide (FGAR) and glutamine to yield formylglycinamidine ribonucleotide (FGAM) and glutamate. The FGAM synthase complex is composed of three subunits. PurQ produces an ammonia molecule by converting glutamine to glutamate. PurL transfers the ammonia molecule to FGAR to form FGAM in an ATP-dependent manner. PurS interacts with PurQ and PurL and is thought to assist in the transfer of the ammonia molecule from PurQ to PurL. This Thermus thermophilus (strain ATCC 27634 / DSM 579 / HB8) protein is Phosphoribosylformylglycinamidine synthase subunit PurQ.